Here is a 1013-residue protein sequence, read N- to C-terminus: MSRKYRKKLSRDDIRAVGFDFIEFLDDRETRSTTDRNTLKEIYNEQFRDRDGVRDPNFSSVLFALTRSSRTRVTRSEVFFDKKIRVRQNDQWSRPYRSQQNHATPHLNDAISRPSTTRVSDPSSVPEPENRVIARRRLAKTIMRQGNSEDMSVFFADKYGVRVSSELQIEDGKIHWCVEGAEVHELKLFVENTGQEAILFTCFSALHYLQYFTLDDSQRVRKDNPHRLEPNETYEVILRFKSDQIGVYPATLAFEFKENQDTRPFHIVRFIEAQHRSELTAQLGPTEPFRPKRLDTNQPMKWSIDEGFKPESSSQNFLKFVVPLDNYNCPSYTSALIEVLKGNRSSGKQLQEHQLTLESDLSFNNYMDRFDLLLYLEEDQMRMDIKRYNKKDVSMVRDRDKKLLVLELPGVSENRPSVLRGDHLLLTKSEELQNSNVTKYKGYVHRVELDQVKLGFSKRLLERFIDNMKFSVEFTINRLPLRLQHRAVHMVVQHHLKDVLFPVASRRLNPVSPSALRLFDQKLEKNPEQKTAVCNIVAGTSKPAPYLVFGPPGTGKTVTIVEAIKQVEKNTGGARILACAPSNSAADQLGEKLITSQHVDARNIYRIYASSRNPKEIPKVLENNSNVEGENIIFPCKEDLMPYKIVVCTLVTAGRLVSGGFPVGHFSHIFVDEAGHAVEPEIVISVAGLLNAETGQLVLAGDPKQLGPILRSPFAIKYGLGLSLLERLMTQNELYQKGDTGFDNRYVTKLLQNYRSHPSILKVPNELFYDNELKACADEISSRQYCTWEHLPKRGFPVIFHGVVGKDERESTSPSFFNTSEIDKIMDYLKKLLLTQAKKGIAKISPKDIGIIAPYRKQVEKIRQAIKIHRELKSLSGIEELKVGSVEEFQGQERKVIIVSTVRSSKEHIILDDKFNIGFLKNEKRFNVAVTRAKALLIMVGNPIILRTDEIWGRFMNYCIQERGYTGYDITHLEETDVIAERLLSLNIRQEITVETEESVVQQFLSPPWRHEH.

Polar residues-rich tracts occupy residues 91–103 (QWSRPYRSQQNHA) and 113–123 (RPSTTRVSDPS). The tract at residues 91–129 (QWSRPYRSQQNHATPHLNDAISRPSTTRVSDPSSVPEPE) is disordered. 550 to 557 (GPPGTGKT) provides a ligand contact to ATP. The DEAG box motif lies at 672-675 (DEAG).

This sequence belongs to the DNA2/NAM7 helicase family. SDE3 subfamily.

It is found in the cytoplasm. Its subcellular location is the P-body. The catalysed reaction is ATP + H2O = ADP + phosphate + H(+). In terms of biological role, probable RNA helicase. Required for RNA-mediated gene silencing by the RNA-induced silencing complex (RISC). Required for both miRNA-mediated translational repression and miRNA-mediated cleavage of complementary mRNAs by RISC. The protein is Putative helicase mov-10-B.1 (mov10b.1) of Danio rerio (Zebrafish).